The sequence spans 207 residues: MLSLSKPLQEFYRLDKCLSKHGTRFEFVNDKEIICSPDESNTHTFVILEGVVSLVRGDKVLIGIVQAPFIFGLADGVAKKEAQYKLIAESGCIGYRLSSSQTLAIIEQNQLWREAFCWIVWKSQVLELRDKQLIGNNSYDQIRATLMTMIEWDEELRSRIGVMNYIHQRTRVSRSVVAEVLAALRKGNYIEMNKGKLISINRLPSEY.

Positions 163–182 form a DNA-binding region, H-T-H motif; the sequence is MNYIHQRTRVSRSVVAEVLA.

The protein belongs to the IprA family.

In terms of biological role, involved in oxidative stress resistance. The chain is Inhibitor of hydrogen peroxide resistance from Salmonella typhimurium (strain LT2 / SGSC1412 / ATCC 700720).